The primary structure comprises 498 residues: Histidine--tRNA ligase (498 aa).

Belongs to the class-II aminoacyl-tRNA synthetase family. As to quaternary structure, homodimer.

The protein resides in the cytoplasm. The catalysed reaction is tRNA(His) + L-histidine + ATP = L-histidyl-tRNA(His) + AMP + diphosphate + H(+). In Mycoplasmopsis synoviae (strain 53) (Mycoplasma synoviae), this protein is Histidine--tRNA ligase.